Reading from the N-terminus, the 380-residue chain is Beta sliding clamp (380 aa).

The protein belongs to the beta sliding clamp family. As to quaternary structure, forms a ring-shaped head-to-tail homodimer around DNA which binds and tethers DNA polymerases and other proteins to the DNA. The DNA replisome complex has a single clamp-loading complex (3 tau and 1 each of delta, delta', psi and chi subunits) which binds 3 Pol III cores (1 core on the leading strand and 2 on the lagging strand) each with a beta sliding clamp dimer. Additional proteins in the replisome are other copies of gamma, psi and chi, Ssb, DNA helicase and RNA primase.

The protein localises to the cytoplasm. Its function is as follows. Confers DNA tethering and processivity to DNA polymerases and other proteins. Acts as a clamp, forming a ring around DNA (a reaction catalyzed by the clamp-loading complex) which diffuses in an ATP-independent manner freely and bidirectionally along dsDNA. Initially characterized for its ability to contact the catalytic subunit of DNA polymerase III (Pol III), a complex, multichain enzyme responsible for most of the replicative synthesis in bacteria; Pol III exhibits 3'-5' exonuclease proofreading activity. The beta chain is required for initiation of replication as well as for processivity of DNA replication. The protein is Beta sliding clamp (dnaN) of Lactococcus lactis subsp. lactis (strain IL1403) (Streptococcus lactis).